A 122-amino-acid polypeptide reads, in one-letter code: Large ribosomal subunit protein uL14 (122 aa).

It belongs to the universal ribosomal protein uL14 family. In terms of assembly, part of the 50S ribosomal subunit. Forms a cluster with proteins L3 and L19. In the 70S ribosome, L14 and L19 interact and together make contacts with the 16S rRNA in bridges B5 and B8.

In terms of biological role, binds to 23S rRNA. Forms part of two intersubunit bridges in the 70S ribosome. The protein is Large ribosomal subunit protein uL14 of Thermomicrobium roseum (strain ATCC 27502 / DSM 5159 / P-2).